The sequence spans 483 residues: Probable glycine dehydrogenase (decarboxylating) subunit 2 (483 aa).

Lys-267 carries the N6-(pyridoxal phosphate)lysine modification.

It belongs to the GcvP family. C-terminal subunit subfamily. The glycine cleavage system is composed of four proteins: P, T, L and H. In this organism, the P 'protein' is a heterodimer of two subunits. Pyridoxal 5'-phosphate is required as a cofactor.

The catalysed reaction is N(6)-[(R)-lipoyl]-L-lysyl-[glycine-cleavage complex H protein] + glycine + H(+) = N(6)-[(R)-S(8)-aminomethyldihydrolipoyl]-L-lysyl-[glycine-cleavage complex H protein] + CO2. Its function is as follows. The glycine cleavage system catalyzes the degradation of glycine. The P protein binds the alpha-amino group of glycine through its pyridoxal phosphate cofactor; CO(2) is released and the remaining methylamine moiety is then transferred to the lipoamide cofactor of the H protein. This is Probable glycine dehydrogenase (decarboxylating) subunit 2 from Kosmotoga olearia (strain ATCC BAA-1733 / DSM 21960 / TBF 19.5.1).